Reading from the N-terminus, the 248-residue chain is MSYLIIVRHGESGWNVDGRFGGWVDVPLTGKGIKEALLCAAELEGIDLDVTFTSKLIRAQETLFLILSKQKKIGVFVHEEAGTGEDRTEREDGSRKDRKEKRYAYPPNTEKNLIPIHSNEALNERYYGILQGKKKDKMKAKYGEEQILHWCRSFDEGPPEGESLKDIYRRAVPYFEKEIFPILQDGKNVIVCAHQNSLRALIKHIEGISNEDIRKIRLANARPVIYTFSGGRLVRENAETDPSVKRNL.

Residues 8 to 15 (RHGESGWN) and Arg58 contribute to the substrate site. His9 acts as the Tele-phosphohistidine intermediate in catalysis. Residues 82 to 101 (GTGEDRTEREDGSRKDRKEK) are disordered. The active-site Proton donor/acceptor is Glu124. Residues 124–127 (ERYY) and Lys135 contribute to the substrate site.

Belongs to the phosphoglycerate mutase family. BPG-dependent PGAM subfamily.

It catalyses the reaction (2R)-2-phosphoglycerate = (2R)-3-phosphoglycerate. It participates in carbohydrate degradation; glycolysis; pyruvate from D-glyceraldehyde 3-phosphate: step 3/5. Catalyzes the interconversion of 2-phosphoglycerate and 3-phosphoglycerate. This chain is 2,3-bisphosphoglycerate-dependent phosphoglycerate mutase, found in Methanosarcina acetivorans (strain ATCC 35395 / DSM 2834 / JCM 12185 / C2A).